We begin with the raw amino-acid sequence, 325 residues long: Beta-ketoacyl-[acyl-carrier-protein] synthase III (325 aa).

Active-site residues include Cys116 and His252. The segment at Gln253–Arg257 is ACP-binding. Asn282 is an active-site residue.

This sequence belongs to the thiolase-like superfamily. FabH family. Homodimer.

Its subcellular location is the cytoplasm. The catalysed reaction is malonyl-[ACP] + acetyl-CoA + H(+) = 3-oxobutanoyl-[ACP] + CO2 + CoA. It participates in lipid metabolism; fatty acid biosynthesis. In terms of biological role, catalyzes the condensation reaction of fatty acid synthesis by the addition to an acyl acceptor of two carbons from malonyl-ACP. Catalyzes the first condensation reaction which initiates fatty acid synthesis and may therefore play a role in governing the total rate of fatty acid production. Possesses both acetoacetyl-ACP synthase and acetyl transacylase activities. Its substrate specificity determines the biosynthesis of branched-chain and/or straight-chain of fatty acids. The protein is Beta-ketoacyl-[acyl-carrier-protein] synthase III of Xanthomonas campestris pv. campestris (strain ATCC 33913 / DSM 3586 / NCPPB 528 / LMG 568 / P 25).